Consider the following 597-residue polypeptide: Polyphenol oxidase latent form, chloroplastic (597 aa).

The N-terminal 49 residues, 1–49, are a transit peptide targeting the chloroplast; it reads MATAPSPTTMGTYSSLISTNSFSTFLPNKSQLSLSGKSKHYVARRSSIS. The tract at residues 49-70 is disordered; sequence SCKATNNNNSNNQNEQQEESSR. A thylakoid-targeting transit peptide spans 50 to 101; the sequence is CKATNNNNSNNQNEQQEESSRLLGKLDRRNILIGLGGLYGATTLDRKPFAFA. Over residues 54–63 the composition is skewed to low complexity; it reads NNNNSNNQNE. Cystine bridges form between cysteine 112-cysteine 128 and cysteine 127-cysteine 189. 6 residues coordinate Cu cation: histidine 188, histidine 209, histidine 218, histidine 341, histidine 345, and histidine 375. The 2'-(S-cysteinyl)-histidine (Cys-His) cross-link spans 192–209; the sequence is CNGAYPQVGFTDNDIQVH.

Belongs to the tyrosinase family. In terms of assembly, monomer. The cofactor is Cu(2+). As to expression, expressed in immature-green fruit.

Its subcellular location is the plastid. It is found in the chloroplast thylakoid lumen. It catalyses the reaction 2 catechol + O2 = 2 1,2-benzoquinone + 2 H2O. Its activity is regulated as follows. Activated in the presence of substrate at low pH. Specific activity fluctuates during fruit ripening, starting at immature-green stage, reaching a peak at the breaker stage, followed by a sharp decrease until the half-ripe stage to remain stable during the following development stages. Triggered by CuSO(4) and by low concentrations of SDS. Repressed by several inhibitors including 4-hexylresorcinol, ascorbic acid, benzoic acid, kojic acid, glutathione (reduced form), L-cysteine and sodium metabisulfite. Inhibited by various salt such as FeSO(4), KCl, NaCl, CaCl(2), MnCl(2), NiCl(2) and AlCl(3). Spontaneously activated during storage at 4 degrees Celsius. Functionally, catalyzes the oxidation of mono- and o-diphenols to o-diquinones. Uses preferentially 4-methylcatechol and chlorogenic acid as substrates, followed by caffeic acid, pyrogallol, and catechol, but barely active toward dopamine and L-dopa. No activity detected with monophenols (e.g. phenol and tyramine). The chain is Polyphenol oxidase latent form, chloroplastic from Prunus armeniaca (Apricot).